Here is a 927-residue protein sequence, read N- to C-terminus: Autophagy-related protein 13 (927 aa).

Disordered stretches follow at residues 1-66 (MHQQ…PPAD), 334-359 (SLPQ…RSKP), 388-559 (LRSV…AQPG), 628-716 (TESM…TIRE), and 786-927 (QMQL…RRGW). Over residues 14 to 30 (PGATTQPNLPSRSNSTR) the composition is skewed to polar residues. 3 stretches are compositionally biased toward polar residues: residues 393–402 (QPGSDTSSPP), 513–523 (PASTSRYSSSF), and 544–557 (GSSG…SVAQ). Low complexity predominate over residues 630 to 671 (SMTSSVQMQRSSSSSSRQLTSVPGMTAPASVSASSSPGKPLS). A compositionally biased stretch (polar residues) spans 684–716 (LSENSIIDYSGQGRITSRQGRTSDNTQPGTIRE). Basic and acidic residues predominate over residues 793–803 (STQRPSDRLEP). Polar residues predominate over residues 850–868 (HKQTPPQSSRGSFNGSLNR). Basic and acidic residues predominate over residues 891–901 (PQGRRSIEEAR).

It belongs to the ATG13 family. Fungi subfamily. In terms of assembly, hypophosphorylated form interacts with ATG1 to form the ATG1-ATG13 kinase complex. The ATG1-ATG13 complex interacts with the ATG17-ATG29-ATG31 complex through direct interaction with ATG17.

The protein resides in the cytoplasm. It localises to the preautophagosomal structure. Functionally, activates the ATG1 kinase in a nutritional condition dependent manner through the TOR pathway, leading to autophagy. Involved in ATG9 and ATG23 cycling through the pre-autophagosomal structure. Also involved in cytoplasm to vacuole transport (Cvt) and more specifically in Cvt vesicle formation. Seems to play a role in the switching machinery regulating the conversion between the Cvt pathway and autophagy. Finally, ATG13 is also required for glycogen storage during stationary phase. Autophagy is required for proper vegetative growth, asexual/sexual reproduction, and full virulence. Autophagy is particularly involved in the biosynthesis of deoxynivalenol (DON), an important virulence determinant. This is Autophagy-related protein 13 from Gibberella zeae (strain ATCC MYA-4620 / CBS 123657 / FGSC 9075 / NRRL 31084 / PH-1) (Wheat head blight fungus).